We begin with the raw amino-acid sequence, 273 residues long: Cbp/p300-interacting transactivator 2 (273 aa).

A disordered region spans residues 137–204 (DLHPAAGHQM…GSGGSGSSNM (68 aa)). Positions 165 to 200 (STPGGSGGSSTPGGSGGSAGGGAGSSNSGGGSGGSG) are enriched in gly residues.

It belongs to the CITED family. Interacts (via C-terminus) with SMAD2. Interacts (via C-terminus) with SMAD3 (via MH2 domain). Interacts with LHX2 (via LIM domains). Interacts with WT1. Interacts (via C-terminus) with EP300 (via CH1 domain); the interaction is stimulated in response to hypoxia. Interacts with PPARA. Interacts (via C-terminus) with TFAP2A, TFAP2B and TFAP2C.

The protein resides in the nucleus. Transcriptional coactivator of the p300/CBP-mediated transcription complex. Acts as a bridge, linking TFAP2 transcription factors and the p300/CBP transcriptional coactivator complex in order to stimulate TFAP2-mediated transcriptional activation. Positively regulates TGF-beta signaling through its association with the SMAD/p300/CBP-mediated transcriptional coactivator complex. Stimulates the peroxisome proliferator-activated receptors PPARA transcriptional activity. Enhances estrogen-dependent transactivation mediated by estrogen receptors. Also acts as a transcriptional corepressor; interferes with the binding of the transcription factors HIF1A or STAT2 and the p300/CBP transcriptional coactivator complex. Participates in sex determination and early gonad development by stimulating transcription activation of SRY. Plays a role in controlling left-right patterning during embryogenesis; potentiates transcriptional activation of NODAL-mediated gene transcription in the left lateral plate mesoderm (LPM). Plays an essential role in differentiation of the adrenal cortex from the adrenogonadal primordium (AGP); stimulates WT1-mediated transcription activation thereby up-regulating the nuclear hormone receptor NR5A1 promoter activity. Associates with chromatin to the PITX2 P1 promoter region. The chain is Cbp/p300-interacting transactivator 2 (CITED2) from Saguinus labiatus (Red-chested mustached tamarin).